A 217-amino-acid polypeptide reads, in one-letter code: Somatotropin (217 aa).

Positions 1-26 are cleaved as a signal peptide; that stretch reads MMAAGPRTSLLLAFALLCLPWTQVVG. His46 lines the Zn(2+) pocket. Cysteines 79 and 190 form a disulfide. A Phosphoserine modification is found at Ser132. Zn(2+) is bound at residue Glu199. Cys207 and Cys215 form a disulfide bridge.

This sequence belongs to the somatotropin/prolactin family.

The protein resides in the secreted. Its function is as follows. Plays an important role in growth control. Its major role in stimulating body growth is to stimulate the liver and other tissues to secrete IGF1. It stimulates both the differentiation and proliferation of myoblasts. It also stimulates amino acid uptake and protein synthesis in muscle and other tissues. The chain is Somatotropin (GH1) from Bos taurus (Bovine).